The chain runs to 414 residues: Esterase FrsA (414 aa).

The protein belongs to the FrsA family.

The catalysed reaction is a carboxylic ester + H2O = an alcohol + a carboxylate + H(+). Catalyzes the hydrolysis of esters. The chain is Esterase FrsA from Escherichia coli O8 (strain IAI1).